Consider the following 290-residue polypeptide: Forkhead box protein O3B (290 aa).

2 disordered regions span residues 1–30 and 44–239; these read METD…TEEG and AAAA…SSRR. Low complexity-rich tracts occupy residues 44–59 and 75–91; these read AAAA…RGVH and RTPA…EAPA. A Phosphothreonine; by PKB/AKT1 modification is found at Thr117. Residues 142–153 are compositionally biased toward acidic residues; the sequence is IPEEEDDEDDED. A DNA-binding region (fork-head) is located at residues 242 to 290; that stretch reads WGNLSYADLITRAIESSPDRRLTLSQIYEWMVSCVPYFKDKGNSNSSAG.

The protein resides in the cytoplasm. It is found in the cytosol. Transcription factor. In Homo sapiens (Human), this protein is Forkhead box protein O3B.